The chain runs to 26 residues: Acetylcholine receptor subunit delta (26 aa).

This sequence belongs to the ligand-gated ion channel (TC 1.A.9) family. Acetylcholine receptor (TC 1.A.9.1) subfamily. Pentamer of two alpha chains, and one each of the beta, delta, and gamma chains.

The protein localises to the postsynaptic cell membrane. The protein resides in the cell membrane. The enzyme catalyses K(+)(in) = K(+)(out). It carries out the reaction Na(+)(in) = Na(+)(out). Its function is as follows. After binding acetylcholine, the AChR responds by an extensive change in conformation that affects all subunits and leads to opening of an ion-conducting channel across the plasma membrane. The sequence is that of Acetylcholine receptor subunit delta (chrnd) from Electrophorus electricus (Electric eel).